The following is a 348-amino-acid chain: D-erythrose-4-phosphate dehydrogenase (348 aa).

NAD(+)-binding positions include 12–13 and Arg-81; that span reads RI. Substrate contacts are provided by residues 154–156, Arg-200, 213–214, and Arg-236; these read SCT and TK. The Nucleophile role is filled by Cys-155. Asn-318 contacts NAD(+).

Belongs to the glyceraldehyde-3-phosphate dehydrogenase family. Epd subfamily. Homotetramer.

It is found in the cytoplasm. The enzyme catalyses D-erythrose 4-phosphate + NAD(+) + H2O = 4-phospho-D-erythronate + NADH + 2 H(+). The protein operates within cofactor biosynthesis; pyridoxine 5'-phosphate biosynthesis; pyridoxine 5'-phosphate from D-erythrose 4-phosphate: step 1/5. Its function is as follows. Catalyzes the NAD-dependent conversion of D-erythrose 4-phosphate to 4-phosphoerythronate. The sequence is that of D-erythrose-4-phosphate dehydrogenase from Salmonella paratyphi A (strain ATCC 9150 / SARB42).